The following is a 643-amino-acid chain: tRNA 5-methylaminomethyl-2-thiouridine biosynthesis bifunctional protein MnmC (643 aa).

Positions 1–223 (MPDRLVSATL…VDDRLVGDYA (223 aa)) are tRNA (mnm(5)s(2)U34)-methyltransferase. Residues 247 to 643 (IGAGLAGCAV…LRARRVGSAG (397 aa)) are FAD-dependent cmnm(5)s(2)U34 oxidoreductase.

It in the N-terminal section; belongs to the methyltransferase superfamily. tRNA (mnm(5)s(2)U34)-methyltransferase family. This sequence in the C-terminal section; belongs to the DAO family. FAD is required as a cofactor.

The protein resides in the cytoplasm. It carries out the reaction 5-aminomethyl-2-thiouridine(34) in tRNA + S-adenosyl-L-methionine = 5-methylaminomethyl-2-thiouridine(34) in tRNA + S-adenosyl-L-homocysteine + H(+). In terms of biological role, catalyzes the last two steps in the biosynthesis of 5-methylaminomethyl-2-thiouridine (mnm(5)s(2)U) at the wobble position (U34) in tRNA. Catalyzes the FAD-dependent demodification of cmnm(5)s(2)U34 to nm(5)s(2)U34, followed by the transfer of a methyl group from S-adenosyl-L-methionine to nm(5)s(2)U34, to form mnm(5)s(2)U34. This chain is tRNA 5-methylaminomethyl-2-thiouridine biosynthesis bifunctional protein MnmC, found in Burkholderia orbicola (strain MC0-3).